A 157-amino-acid chain; its full sequence is 2-C-methyl-D-erythritol 2,4-cyclodiphosphate synthase (157 aa).

A divalent metal cation is bound by residues D9 and H11. Residues 9–11 (DVH) and 35–36 (HS) each bind 4-CDP-2-C-methyl-D-erythritol 2-phosphate. A divalent metal cation is bound at residue H43. Residues 57-59 (DIG), 62-66 (FPDTD), 101-107 (AEKPKMA), 133-136 (TTTE), F140, and R143 contribute to the 4-CDP-2-C-methyl-D-erythritol 2-phosphate site.

It belongs to the IspF family. Homotrimer. Requires a divalent metal cation as cofactor.

It catalyses the reaction 4-CDP-2-C-methyl-D-erythritol 2-phosphate = 2-C-methyl-D-erythritol 2,4-cyclic diphosphate + CMP. The protein operates within isoprenoid biosynthesis; isopentenyl diphosphate biosynthesis via DXP pathway; isopentenyl diphosphate from 1-deoxy-D-xylulose 5-phosphate: step 4/6. Its function is as follows. Involved in the biosynthesis of isopentenyl diphosphate (IPP) and dimethylallyl diphosphate (DMAPP), two major building blocks of isoprenoid compounds. Catalyzes the conversion of 4-diphosphocytidyl-2-C-methyl-D-erythritol 2-phosphate (CDP-ME2P) to 2-C-methyl-D-erythritol 2,4-cyclodiphosphate (ME-CPP) with a corresponding release of cytidine 5-monophosphate (CMP). The chain is 2-C-methyl-D-erythritol 2,4-cyclodiphosphate synthase from Listeria monocytogenes serovar 1/2a (strain ATCC BAA-679 / EGD-e).